Consider the following 252-residue polypeptide: MRILQLPALRDNYIYLLHDPETATAAVVDPTVAEPVLDKLAELGAELVAIFNTHHHHDHVGGNLQLLARYPRAVVYGSQADRGRIPGQTVELQAGETVAFAGRQAKVLFVPGHTRGHVAYYFPESGDLFCGDTLFAGGCGRLFEGTPEQMLGSLDQLRQLPEATRVWCAHEYTLNNLKFALTVDGDNPDLQARYQQVVALRQAGSPTVPSTIGEERRTNPFLRWDQPALRAATGAQDPVRVFARLRGMKDQF.

Positions 54, 56, 58, 59, 113, 132, and 170 each coordinate Zn(2+).

The protein belongs to the metallo-beta-lactamase superfamily. Glyoxalase II family. In terms of assembly, monomer. The cofactor is Zn(2+).

The catalysed reaction is an S-(2-hydroxyacyl)glutathione + H2O = a 2-hydroxy carboxylate + glutathione + H(+). Its pathway is secondary metabolite metabolism; methylglyoxal degradation; (R)-lactate from methylglyoxal: step 2/2. Thiolesterase that catalyzes the hydrolysis of S-D-lactoyl-glutathione to form glutathione and D-lactic acid. In Synechococcus sp. (strain JA-3-3Ab) (Cyanobacteria bacterium Yellowstone A-Prime), this protein is Hydroxyacylglutathione hydrolase.